The chain runs to 192 residues: Ciliary microtubule-associated protein 3 (192 aa).

As to quaternary structure, interacts with proteins involved in ciliary transport, including ARL13B, CETN1, KIF3A, RAB6A, RAB8A, TUBB1 and TUBG1. Interacts with AURKA.

It is found in the cytoplasmic vesicle. The protein localises to the golgi apparatus. The protein resides in the trans-Golgi network. Its subcellular location is the cytoplasm. In terms of biological role, during primary cilia disassembly, involved in cilia disassembly. Required specifically to control cilia retraction as well as the liberation and duplication of the basal body/centrosome. May act by stimulating AURKA activity at the basal body in a cell cycle-dependent manner. The polypeptide is Ciliary microtubule-associated protein 3 (CIMAP3) (Bos taurus (Bovine)).